We begin with the raw amino-acid sequence, 84 residues long: U21-theraphotoxin-Cg1a 3 (84 aa).

An N-terminal signal peptide occupies residues 1–21 (MKVSVLITLAVLGVMFLLTSA). The propeptide occupies 22-47 (EERGSDQMDSPAWLKSMERIFQSEER). Disulfide bonds link Cys49-Cys63, Cys56-Cys68, and Cys62-Cys76. A Valine amide modification is found at Val82.

The protein belongs to the neurotoxin 10 (Hwtx-1) family. 05 (F4a) subfamily. In terms of tissue distribution, expressed by the venom gland.

The protein resides in the secreted. In terms of biological role, probable ion channel inhibitor. This is U21-theraphotoxin-Cg1a 3 from Chilobrachys guangxiensis (Chinese earth tiger tarantula).